We begin with the raw amino-acid sequence, 455 residues long: Probable glycine dehydrogenase (decarboxylating) subunit 1 (455 aa).

It belongs to the GcvP family. N-terminal subunit subfamily. As to quaternary structure, the glycine cleavage system is composed of four proteins: P, T, L and H. In this organism, the P 'protein' is a heterodimer of two subunits.

It catalyses the reaction N(6)-[(R)-lipoyl]-L-lysyl-[glycine-cleavage complex H protein] + glycine + H(+) = N(6)-[(R)-S(8)-aminomethyldihydrolipoyl]-L-lysyl-[glycine-cleavage complex H protein] + CO2. In terms of biological role, the glycine cleavage system catalyzes the degradation of glycine. The P protein binds the alpha-amino group of glycine through its pyridoxal phosphate cofactor; CO(2) is released and the remaining methylamine moiety is then transferred to the lipoamide cofactor of the H protein. The protein is Probable glycine dehydrogenase (decarboxylating) subunit 1 of Francisella tularensis subsp. holarctica (strain LVS).